The chain runs to 357 residues: MEERMNVLHDFGIQSTRYLQVNYEDSQDWFVLVSVIADLRNAFYVLFPIWFHIQETVGINLLWVAVVGDWFNLVFKWILFGQRPYWWVLDTDYYSNSSVPLIKQFPVTCETGPGSPSGHAMGTAGVYYVMVTSTLAIFRGKKKSTYGFRCLNVVLWLGYWAVQLNVCLSRIYLAAHFPHQVVAGVLSGIAVAETFSHIRGIYNASLQRYCLITFFLFGFALGFYLLLKGLGVDLLWTLEKAKRWCERPEWVHLDTTPFASLFKNLGTLLGLGLALNSSMYRKSCKGELRKSLPFRLACIVASLGLLHLFDSLKPPSQIESIFYILSFCKSATVPFASVSLIPYCLARLLGQTHKKSL.

The Lumenal portion of the chain corresponds to 1–28 (MEERMNVLHDFGIQSTRYLQVNYEDSQD). Residues 29–49 (WFVLVSVIADLRNAFYVLFPI) traverse the membrane as a helical segment. Residues 50–60 (WFHIQETVGIN) lie on the Cytoplasmic side of the membrane. A helical membrane pass occupies residues 61 to 81 (LLWVAVVGDWFNLVFKWILFG). The Lumenal portion of the chain corresponds to 82–117 (QRPYWWVLDTDYYSNSSVPLIKQFPVTCETGPGSPS). Residue Arg-83 coordinates substrate. The N-linked (GlcNAc...) asparagine glycan is linked to Asn-96. A helical transmembrane segment spans residues 118–138 (GHAMGTAGVYYVMVTSTLAIF). His-119 serves as the catalytic Proton donor. Residues 139 to 147 (RGKKKSTYG) lie on the Cytoplasmic side of the membrane. A helical membrane pass occupies residues 148–168 (FRCLNVVLWLGYWAVQLNVCL). The Lumenal portion of the chain corresponds to 169–170 (SR). Arg-170 is a binding site for substrate. A helical transmembrane segment spans residues 171-191 (IYLAAHFPHQVVAGVLSGIAV). The active-site Nucleophile is His-176. Over 192-211 (AETFSHIRGIYNASLQRYCL) the chain is Cytoplasmic. A helical transmembrane segment spans residues 212–232 (ITFFLFGFALGFYLLLKGLGV). Residues 233–254 (DLLWTLEKAKRWCERPEWVHLD) lie on the Lumenal side of the membrane. The helical transmembrane segment at 255-275 (TTPFASLFKNLGTLLGLGLAL) threads the bilayer. The Cytoplasmic segment spans residues 276 to 291 (NSSMYRKSCKGELRKS). A helical transmembrane segment spans residues 292–312 (LPFRLACIVASLGLLHLFDSL). Residues 313–320 (KPPSQIES) are Lumenal-facing. Residues 321–341 (IFYILSFCKSATVPFASVSLI) form a helical membrane-spanning segment. The Cytoplasmic portion of the chain corresponds to 342 to 357 (PYCLARLLGQTHKKSL). The short motif at 354-357 (KKSL) is the Prevents secretion from ER element.

This sequence belongs to the glucose-6-phosphatase family.

The protein resides in the endoplasmic reticulum membrane. It catalyses the reaction D-glucose 6-phosphate + H2O = D-glucose + phosphate. Its pathway is carbohydrate biosynthesis; gluconeogenesis. Hydrolyzes glucose-6-phosphate to glucose in the endoplasmic reticulum. Forms with the glucose-6-phosphate transporter (SLC37A4/G6PT) the complex responsible for glucose production in the terminal step of glycogenolysis and gluconeogenesis. Hence, it is the key enzyme in homeostatic regulation of blood glucose levels. The sequence is that of Glucose-6-phosphatase catalytic subunit 1 (G6pc1) from Rattus norvegicus (Rat).